The following is a 207-amino-acid chain: Guanylate kinase (207 aa).

The Guanylate kinase-like domain occupies 5 to 184 (GNLFIVSAPS…ALADLRAIIR (180 aa)). Position 12 to 19 (12 to 19 (APSGAGKS)) interacts with ATP.

It belongs to the guanylate kinase family.

The protein resides in the cytoplasm. The catalysed reaction is GMP + ATP = GDP + ADP. Essential for recycling GMP and indirectly, cGMP. This is Guanylate kinase from Shewanella oneidensis (strain ATCC 700550 / JCM 31522 / CIP 106686 / LMG 19005 / NCIMB 14063 / MR-1).